The sequence spans 836 residues: Serine/threonine-protein kinase ppk5 (836 aa).

4 disordered regions span residues 1-29 (MVGL…FLSP), 192-214 (INQL…TLSS), 230-307 (CSQF…YKSI), and 328-381 (TPLD…ERQN). Polar residues-rich tracts occupy residues 192-205 (INQL…TNYP), 232-241 (QFASPRSSIV), and 265-288 (KPSN…TKLT). Residues 289–298 (SQRDNDHQKD) show a composition bias toward basic and acidic residues. Residues 338 to 347 (SGKKFNKNSK) show a composition bias toward basic residues. Positions 353-362 (STISSYSSAS) are enriched in low complexity. The Protein kinase domain maps to 518–814 (YEIIDTVGKG…VDSALQHEFI (297 aa)). Residues 524 to 532 (VGKGSFGQV) and Lys-547 contribute to the ATP site. The active-site Proton acceptor is Asp-644. Tyr-678 bears the Phosphotyrosine mark.

It belongs to the protein kinase superfamily. CMGC Ser/Thr protein kinase family. MNB/DYRK subfamily.

The protein resides in the cytoplasm. The catalysed reaction is L-seryl-[protein] + ATP = O-phospho-L-seryl-[protein] + ADP + H(+). It catalyses the reaction L-threonyl-[protein] + ATP = O-phospho-L-threonyl-[protein] + ADP + H(+). Its function is as follows. Has a role in meiosis. This chain is Serine/threonine-protein kinase ppk5 (ppk5), found in Schizosaccharomyces pombe (strain 972 / ATCC 24843) (Fission yeast).